The primary structure comprises 136 residues: Small ribosomal subunit protein uS9 (136 aa).

The tract at residues 97–136 (SPDNRKPLKTEGHLSRDPRAKERRKYGLKKARKAPQFSKR) is disordered. Over residues 98–116 (PDNRKPLKTEGHLSRDPRA) the composition is skewed to basic and acidic residues. The span at 117–136 (KERRKYGLKKARKAPQFSKR) shows a compositional bias: basic residues.

This sequence belongs to the universal ribosomal protein uS9 family.

The sequence is that of Small ribosomal subunit protein uS9 from Prochlorococcus marinus (strain AS9601).